A 93-amino-acid chain; its full sequence is MHNTGKRYSETAKKVAAGRARKRRQAYEKDQLEKQQLEAQEAQRWEEGARTPNQKKLIMEQKKTEKLRAKKERDQLLAAEEEALGKGGRGKRY.

The disordered stretch occupies residues 1 to 73 (MHNTGKRYSE…TEKLRAKKER (73 aa)). Positions 20 to 83 (ARKRRQAYEK…DQLLAAEEEA (64 aa)) form a coiled coil. 2 stretches are compositionally biased toward basic and acidic residues: residues 25–49 (QAYE…EEGA) and 57–73 (LIME…KKER).

It localises to the nucleus. It is found in the cytoplasm. Functionally, likely to play a role in iron homeostasis. This chain is Protein LSO1, found in Saccharomyces cerevisiae (strain ATCC 204508 / S288c) (Baker's yeast).